The sequence spans 234 residues: Zinc finger FYVE domain-containing protein 21 (234 aa).

An FYVE-type zinc finger spans residues Asp-44–Leu-104. Zn(2+) is bound by residues Cys-50, Cys-53, Cys-66, Cys-69, Cys-74, Cys-77, Cys-96, and Cys-99. The interval Ala-107 to Gln-234 is PH-like.

As to quaternary structure, interacts with PTK2/FAK1.

Its subcellular location is the cell junction. It is found in the focal adhesion. It localises to the cytoplasmic vesicle. The protein resides in the endosome. Functionally, plays a role in cell adhesion, and thereby in cell motility which requires repeated formation and disassembly of focal adhesions. Regulates microtubule-induced PTK2/FAK1 dephosphorylation, an event important for focal adhesion disassembly, as well as integrin beta-1/ITGB1 cell surface expression. The polypeptide is Zinc finger FYVE domain-containing protein 21 (ZFYVE21) (Homo sapiens (Human)).